The chain runs to 418 residues: Tryptophan synthase beta chain (418 aa).

N6-(pyridoxal phosphate)lysine is present on Lys-109.

The protein belongs to the TrpB family. Tetramer of two alpha and two beta chains. Requires pyridoxal 5'-phosphate as cofactor.

It catalyses the reaction (1S,2R)-1-C-(indol-3-yl)glycerol 3-phosphate + L-serine = D-glyceraldehyde 3-phosphate + L-tryptophan + H2O. It participates in amino-acid biosynthesis; L-tryptophan biosynthesis; L-tryptophan from chorismate: step 5/5. The beta subunit is responsible for the synthesis of L-tryptophan from indole and L-serine. This Thermus thermophilus (strain ATCC 27634 / DSM 579 / HB8) protein is Tryptophan synthase beta chain.